The primary structure comprises 248 residues: Probable transcriptional regulatory protein Nwi_2729 (248 aa).

Residues 1 to 21 (MAGHSQFKNIMHRKGRQDAQK) form a disordered region.

It belongs to the TACO1 family.

Its subcellular location is the cytoplasm. This Nitrobacter winogradskyi (strain ATCC 25391 / DSM 10237 / CIP 104748 / NCIMB 11846 / Nb-255) protein is Probable transcriptional regulatory protein Nwi_2729.